We begin with the raw amino-acid sequence, 394 residues long: Seipin (394 aa).

Topologically, residues methionine 1–leucine 27 are cytoplasmic. A helical transmembrane segment spans residues leucine 28–leucine 48. Residues tyrosine 49–asparagine 242 lie on the Lumenal side of the membrane. N-linked (GlcNAc...) asparagine glycans are attached at residues asparagine 88 and asparagine 242. A helical membrane pass occupies residues phenylalanine 243–tryptophan 263. The Cytoplasmic segment spans residues proline 264–serine 394. The disordered stretch occupies residues arginine 281 to serine 394. Phosphoserine is present on serine 289. The segment covering glutamine 292–glutamine 303 has biased composition (low complexity). Phosphoserine occurs at positions 346 and 351.

The protein belongs to the seipin family. As to quaternary structure, undecamer (an oligomer having eleven subunits). Oligomerization is important for its function in lipid droplet formation. Interacts with LDAF1 to form an oligomeric complex. Interacts with RAB18. Interacts with ZFYVE1 in a RAB18-dependent manner.

It localises to the endoplasmic reticulum membrane. The protein localises to the lipid droplet. In terms of biological role, plays a crucial role in the formation of lipid droplets (LDs) which are storage organelles at the center of lipid and energy homeostasis. In association with LDAF1, defines the sites of LD formation in the ER. Also required for growth and maturation of small nascent LDs into larger mature LDs. Mediates the formation and/or stabilization of endoplasmic reticulum-lipid droplets (ER-LD) contacts, facilitating protein and lipid delivery from the ER into growing LDs. Regulates the maturation of ZFYVE1-positive nascent LDs and the function of the RAB18-ZFYVE1 complex in mediating the formation of ER-LD contacts. Binds anionic phospholipids including phosphatidic acid. Plays an important role in the differentiation and development of adipocytes. The protein is Seipin of Bos taurus (Bovine).